A 154-amino-acid chain; its full sequence is Small ribosomal subunit protein uS15 (154 aa).

The segment covering 1 to 14 has biased composition (basic residues); the sequence is MAPVPHRSRHKKGR. The segment at 1 to 24 is disordered; the sequence is MAPVPHRSRHKKGRSGSVRPAHPT.

This sequence belongs to the universal ribosomal protein uS15 family. In terms of assembly, part of the 30S ribosomal subunit.

The polypeptide is Small ribosomal subunit protein uS15 (Pyrobaculum arsenaticum (strain DSM 13514 / JCM 11321 / PZ6)).